The chain runs to 362 residues: Chorismate synthase (362 aa).

NADP(+) contacts are provided by Arg-47 and Arg-53. FMN-binding positions include 124-126 (RSS), Gly-285, 300-304 (KPTAT), and Arg-326.

The protein belongs to the chorismate synthase family. In terms of assembly, homotetramer. FMNH2 is required as a cofactor.

It catalyses the reaction 5-O-(1-carboxyvinyl)-3-phosphoshikimate = chorismate + phosphate. It participates in metabolic intermediate biosynthesis; chorismate biosynthesis; chorismate from D-erythrose 4-phosphate and phosphoenolpyruvate: step 7/7. Its function is as follows. Catalyzes the anti-1,4-elimination of the C-3 phosphate and the C-6 proR hydrogen from 5-enolpyruvylshikimate-3-phosphate (EPSP) to yield chorismate, which is the branch point compound that serves as the starting substrate for the three terminal pathways of aromatic amino acid biosynthesis. This reaction introduces a second double bond into the aromatic ring system. This is Chorismate synthase from Cyanothece sp. (strain PCC 7425 / ATCC 29141).